We begin with the raw amino-acid sequence, 123 residues long: Cytochrome b-c1 complex subunit 7 (123 aa).

Belongs to the UQCRB/QCR7 family. In terms of assembly, component of the ubiquinol-cytochrome c oxidoreductase (cytochrome b-c1 complex, complex III, CIII), a multisubunit enzyme composed of 3 respiratory subunits cytochrome b, cytochrome c1 and Rieske protein, 2 core protein subunits, and additional low-molecular weight protein subunits. The complex exists as an obligatory dimer and forms supercomplexes (SCs) in the inner mitochondrial membrane with cytochrome c oxidase (complex IV, CIV). In terms of processing, the N-terminus is blocked.

Its subcellular location is the mitochondrion inner membrane. Its function is as follows. Component of the ubiquinol-cytochrome c oxidoreductase, a multisubunit transmembrane complex that is part of the mitochondrial electron transport chain which drives oxidative phosphorylation. The respiratory chain contains 3 multisubunit complexes succinate dehydrogenase (complex II, CII), ubiquinol-cytochrome c oxidoreductase (cytochrome b-c1 complex, complex III, CIII) and cytochrome c oxidase (complex IV, CIV), that cooperate to transfer electrons derived from NADH and succinate to molecular oxygen, creating an electrochemical gradient over the inner membrane that drives transmembrane transport and the ATP synthase. The cytochrome b-c1 complex catalyzes electron transfer from ubiquinol to cytochrome c, linking this redox reaction to translocation of protons across the mitochondrial inner membrane, with protons being carried across the membrane as hydrogens on the quinol. In the process called Q cycle, 2 protons are consumed from the matrix, 4 protons are released into the intermembrane space and 2 electrons are passed to cytochrome c. The protein is Cytochrome b-c1 complex subunit 7 of Solanum tuberosum (Potato).